We begin with the raw amino-acid sequence, 1058 residues long: Leucine-rich repeat and coiled-coil domain-containing protein PF3D7_0703800 (1058 aa).

Residues 1–10 show a composition bias toward basic residues; sequence MAIKKKKKET. The tract at residues 1–34 is disordered; sequence MAIKKKKKETKSKDNNNDNLRNEKKSTNLENGKY. Over residues 11-34 the composition is skewed to basic and acidic residues; the sequence is KSKDNNNDNLRNEKKSTNLENGKY. The stretch at 515–544 forms a coiled coil; that stretch reads LKQLYTFIKNYENNNDKLNIKSQIINKDKN. Over residues 641-661 the composition is skewed to basic and acidic residues; sequence ENKDHLQHEEHTHEEEPKDAN. Disordered stretches follow at residues 641–665 and 706–728; these read ENKDHLQHEEHTHEEEPKDANGDMV and NIEDKSGDMENMKEPNGDMENMK. Residues 872–905 are a coiled coil; the sequence is NYDHTQENILKNKNNMEDQNNLLEQNIMTDQLQN.

This Plasmodium falciparum (isolate 3D7) protein is Leucine-rich repeat and coiled-coil domain-containing protein PF3D7_0703800.